The sequence spans 1028 residues: Endosome/lysosome-associated apoptosis and autophagy regulator family member 2 (1028 aa).

The first 47 residues, Met-1 to Ala-47, serve as a signal peptide directing secretion. Topologically, residues Gly-48–Lys-928 are extracellular. Asn-168 is a glycosylation site (N-linked (GlcNAc...) asparagine). 3 disulfides stabilise this stretch: Cys-292-Cys-309, Cys-322-Cys-345, and Cys-325-Cys-357. Residues Asn-404 and Asn-690 are each glycosylated (N-linked (GlcNAc...) asparagine). One can recognise an MRH domain in the interval Ser-671 to Leu-876. 4 disulfide bridges follow: Cys-673–Cys-719, Cys-729–Cys-757, Cys-826–Cys-862, and Cys-838–Cys-874. Residues Val-929–Trp-949 form a helical membrane-spanning segment. Over Lys-950–Ile-1028 the chain is Cytoplasmic. A Phosphoserine modification is found at Ser-1017.

Belongs to the ELAPOR family.

The protein localises to the cell membrane. Functions as a regulator of the BMP signaling pathway and may be involved in epidermal differentiation. The protein is Endosome/lysosome-associated apoptosis and autophagy regulator family member 2 of Mus musculus (Mouse).